We begin with the raw amino-acid sequence, 104 residues long: ATP synthase subunit c (104 aa).

2 consecutive transmembrane segments (helical) span residues 31–51 (SMIAAGLGLGLAALGGAIGMG) and 75–95 (MFIALAMIEAQVIYALVIALI).

Belongs to the ATPase C chain family. In terms of assembly, F-type ATPases have 2 components, F(1) - the catalytic core - and F(0) - the membrane proton channel. F(1) has five subunits: alpha(3), beta(3), gamma(1), delta(1), epsilon(1). F(0) has three main subunits: a(1), b(2) and c(10-14). The alpha and beta chains form an alternating ring which encloses part of the gamma chain. F(1) is attached to F(0) by a central stalk formed by the gamma and epsilon chains, while a peripheral stalk is formed by the delta and b chains.

Its subcellular location is the cell inner membrane. In terms of biological role, f(1)F(0) ATP synthase produces ATP from ADP in the presence of a proton or sodium gradient. F-type ATPases consist of two structural domains, F(1) containing the extramembraneous catalytic core and F(0) containing the membrane proton channel, linked together by a central stalk and a peripheral stalk. During catalysis, ATP synthesis in the catalytic domain of F(1) is coupled via a rotary mechanism of the central stalk subunits to proton translocation. Key component of the F(0) channel; it plays a direct role in translocation across the membrane. A homomeric c-ring of between 10-14 subunits forms the central stalk rotor element with the F(1) delta and epsilon subunits. The chain is ATP synthase subunit c from Sulfurimonas denitrificans (strain ATCC 33889 / DSM 1251) (Thiomicrospira denitrificans (strain ATCC 33889 / DSM 1251)).